Here is a 147-residue protein sequence, read N- to C-terminus: Siroheme decarboxylase NirG subunit (147 aa).

This sequence belongs to the Ahb/Nir family. As to quaternary structure, probably forms a complex composed of NirD, NirL, NirG and NirH. All proteins are required for the total conversion of siroheme to didecarboxysiroheme.

The catalysed reaction is siroheme + 2 H(+) = 12,18-didecarboxysiroheme + 2 CO2. Its pathway is porphyrin-containing compound metabolism. Involved in heme d1 biosynthesis. Catalyzes the decarboxylation of siroheme into didecarboxysiroheme. This is Siroheme decarboxylase NirG subunit from Stutzerimonas stutzeri (Pseudomonas stutzeri).